The chain runs to 236 residues: tRNA1(Val) (adenine(37)-N6)-methyltransferase (236 aa).

It belongs to the methyltransferase superfamily. tRNA (adenine-N(6)-)-methyltransferase family.

It localises to the cytoplasm. It catalyses the reaction adenosine(37) in tRNA1(Val) + S-adenosyl-L-methionine = N(6)-methyladenosine(37) in tRNA1(Val) + S-adenosyl-L-homocysteine + H(+). Functionally, specifically methylates the adenine in position 37 of tRNA(1)(Val) (anticodon cmo5UAC). This chain is tRNA1(Val) (adenine(37)-N6)-methyltransferase, found in Histophilus somni (strain 2336) (Haemophilus somnus).